Here is a 202-residue protein sequence, read N- to C-terminus: Regulator of G-protein signaling 16 (202 aa).

S-palmitoyl cysteine attachment occurs at residues cysteine 2 and cysteine 12. Positions 65–181 (SFDLLLSSKN…LKSPAYRDLA (117 aa)) constitute an RGS domain. Position 168 is a phosphotyrosine; by EGFR (tyrosine 168). Phosphotyrosine is present on tyrosine 177.

In terms of assembly, interacts with GNAI1 and GNAQ. Interacts with GNAI2, GNAI3 and GNAO1. Post-translationally, palmitoylated on Cys-2 and/or Cys-12. Phosphorylated. Phosphorylation at Tyr-168 by EGFR enhances GTPase accelerating (GAP) activity toward GNAI1. Abundantly expressed in retina with lower levels of expression in most other tissues.

The protein localises to the membrane. In terms of biological role, regulates G protein-coupled receptor signaling cascades. Inhibits signal transduction by increasing the GTPase activity of G protein alpha subunits, thereby driving them into their inactive GDP-bound form. Plays an important role in the phototransduction cascade by regulating the lifetime and effective concentration of activated transducin alpha. May regulate extra and intracellular mitogenic signals. This is Regulator of G-protein signaling 16 (RGS16) from Homo sapiens (Human).